Reading from the N-terminus, the 151-residue chain is Large ribosomal subunit protein bL9 (151 aa).

The protein belongs to the bacterial ribosomal protein bL9 family.

In terms of biological role, binds to the 23S rRNA. The polypeptide is Large ribosomal subunit protein bL9 (Oenococcus oeni (strain ATCC BAA-331 / PSU-1)).